Here is a 203-residue protein sequence, read N- to C-terminus: Probable flagellin 1 (203 aa).

Positions 1–11 (MGMRFLKNEKG) are excised as a propeptide.

Belongs to the archaeal flagellin family.

It localises to the archaeal flagellum. Flagellin is the subunit protein which polymerizes to form the filaments of archaeal flagella. The polypeptide is Probable flagellin 1 (flaB1) (Archaeoglobus fulgidus (strain ATCC 49558 / DSM 4304 / JCM 9628 / NBRC 100126 / VC-16)).